Reading from the N-terminus, the 333-residue chain is tRNA uridine(34) hydroxylase (333 aa).

The Rhodanese domain occupies 123–217 (SDPEVILVDT…YLEEIKQEES (95 aa)). Catalysis depends on C177, which acts as the Cysteine persulfide intermediate.

It belongs to the TrhO family.

It catalyses the reaction uridine(34) in tRNA + AH2 + O2 = 5-hydroxyuridine(34) in tRNA + A + H2O. In terms of biological role, catalyzes oxygen-dependent 5-hydroxyuridine (ho5U) modification at position 34 in tRNAs. This is tRNA uridine(34) hydroxylase from Shewanella sp. (strain MR-7).